Reading from the N-terminus, the 65-residue chain is Large ribosomal subunit protein bL35 (65 aa).

Positions 1-22 (MPKIKTVRGAAKRFKKTGKGGF) are disordered. A compositionally biased stretch (basic residues) spans 10–22 (AAKRFKKTGKGGF).

It belongs to the bacterial ribosomal protein bL35 family.

The chain is Large ribosomal subunit protein bL35 from Klebsiella pneumoniae (strain 342).